The following is a 318-amino-acid chain: Isoeugenol synthase 1 (318 aa).

NADP(+) is bound by residues 10–13 (TGYI), 32–43 (ARPLTPDSTPSS), R33, 84–86 (VPM), 109–111 (SEF), K131, and 151–153 (NCF). The active-site Proton donor/acceptor is the K131. Position 260 (P260) interacts with substrate.

This sequence belongs to the NmrA-type oxidoreductase family. As to expression, mostly expressed in petals, and, to a lower extent, in sepals, stamens and pistils.

It catalyses the reaction (E)-isoeugenol + acetate + NADP(+) = (E)-coniferyl acetate + NADPH. It functions in the pathway aromatic compound metabolism; phenylpropanoid biosynthesis. Its function is as follows. Catalyzes the synthesis of the phenylpropene isoeugenol from coniferyl acetate. Phenylpropenes are the primary constituents of various essential plant oils. They are produced as antimicrobial and antianimal compounds, or as floral attractants of pollinators. Isoeugenol is a characteristic aromatic constituent of spices and a floral volatile compound. The protein is Isoeugenol synthase 1 of Clarkia breweri (Fairy fans).